Here is a 735-residue protein sequence, read N- to C-terminus: Stonin-1 (735 aa).

Positions 1–35 are disordered; sequence MCSTNPGKWVTFDDDPAVQSSQKSKNFPLENQGVC. Residues 275 to 408 form the SHD domain; the sequence is GWSFMLRIPE…KLPAVSKPKK (134 aa). Residues 412-715 form the MHD domain; that stretch reads EQEISLEIVD…ACYNIQVEIE (304 aa).

The protein belongs to the Stoned B family. Ubiquitous.

The protein localises to the cytoplasm. Its subcellular location is the membrane. May be involved in the endocytic machinery. This chain is Stonin-1 (STON1), found in Homo sapiens (Human).